Here is a 94-residue protein sequence, read N- to C-terminus: Acylphosphatase (94 aa).

An Acylphosphatase-like domain is found at 7-94 (AALVRITGRV…EAPAGFRITR (88 aa)). Active-site residues include Arg-22 and Asn-40.

The protein belongs to the acylphosphatase family.

It catalyses the reaction an acyl phosphate + H2O = a carboxylate + phosphate + H(+). This is Acylphosphatase (acyP) from Sinorhizobium medicae (strain WSM419) (Ensifer medicae).